A 329-amino-acid polypeptide reads, in one-letter code: Holliday junction branch migration complex subunit RuvB (329 aa).

The interval 1–20 (MSRILEGDPVEGEKSWENEL) is disordered. Residues 1-181 (MSRILEGDPV…FGIVERLQFY (181 aa)) form a large ATPase domain (RuvB-L) region. The span at 11–20 (EGEKSWENEL) shows a compositional bias: basic and acidic residues. ATP-binding positions include L20, R21, G62, K65, T66, T67, 128–130 (EDY), R171, Y181, and R218. A Mg(2+)-binding site is contributed by T66. The segment at 182–252 (DKDALRQILM…IAVYALNQLG (71 aa)) is small ATPAse domain (RuvB-S). The segment at 255–329 (QYGLDLMDRR…FAKSSVLADK (75 aa)) is head domain (RuvB-H). DNA contacts are provided by R291, K310, and R315.

Belongs to the RuvB family. Homohexamer. Forms an RuvA(8)-RuvB(12)-Holliday junction (HJ) complex. HJ DNA is sandwiched between 2 RuvA tetramers; dsDNA enters through RuvA and exits via RuvB. An RuvB hexamer assembles on each DNA strand where it exits the tetramer. Each RuvB hexamer is contacted by two RuvA subunits (via domain III) on 2 adjacent RuvB subunits; this complex drives branch migration. In the full resolvosome a probable DNA-RuvA(4)-RuvB(12)-RuvC(2) complex forms which resolves the HJ.

The protein resides in the cytoplasm. The catalysed reaction is ATP + H2O = ADP + phosphate + H(+). In terms of biological role, the RuvA-RuvB-RuvC complex processes Holliday junction (HJ) DNA during genetic recombination and DNA repair, while the RuvA-RuvB complex plays an important role in the rescue of blocked DNA replication forks via replication fork reversal (RFR). RuvA specifically binds to HJ cruciform DNA, conferring on it an open structure. The RuvB hexamer acts as an ATP-dependent pump, pulling dsDNA into and through the RuvAB complex. RuvB forms 2 homohexamers on either side of HJ DNA bound by 1 or 2 RuvA tetramers; 4 subunits per hexamer contact DNA at a time. Coordinated motions by a converter formed by DNA-disengaged RuvB subunits stimulates ATP hydrolysis and nucleotide exchange. Immobilization of the converter enables RuvB to convert the ATP-contained energy into a lever motion, pulling 2 nucleotides of DNA out of the RuvA tetramer per ATP hydrolyzed, thus driving DNA branch migration. The RuvB motors rotate together with the DNA substrate, which together with the progressing nucleotide cycle form the mechanistic basis for DNA recombination by continuous HJ branch migration. Branch migration allows RuvC to scan DNA until it finds its consensus sequence, where it cleaves and resolves cruciform DNA. This is Holliday junction branch migration complex subunit RuvB from Bdellovibrio bacteriovorus (strain ATCC 15356 / DSM 50701 / NCIMB 9529 / HD100).